The primary structure comprises 379 residues: Probable tRNA sulfurtransferase (379 aa).

The region spanning 52 to 157 (DEFLDKLKFI…RHHAFVFCKI (106 aa)) is the THUMP domain. Residues 175–176 (LL), arginine 257, glycine 279, and glutamine 288 contribute to the ATP site.

The protein belongs to the ThiI family.

It is found in the cytoplasm. The catalysed reaction is [ThiI sulfur-carrier protein]-S-sulfanyl-L-cysteine + a uridine in tRNA + 2 reduced [2Fe-2S]-[ferredoxin] + ATP + H(+) = [ThiI sulfur-carrier protein]-L-cysteine + a 4-thiouridine in tRNA + 2 oxidized [2Fe-2S]-[ferredoxin] + AMP + diphosphate. The enzyme catalyses [ThiS sulfur-carrier protein]-C-terminal Gly-Gly-AMP + S-sulfanyl-L-cysteinyl-[cysteine desulfurase] + AH2 = [ThiS sulfur-carrier protein]-C-terminal-Gly-aminoethanethioate + L-cysteinyl-[cysteine desulfurase] + A + AMP + 2 H(+). It participates in cofactor biosynthesis; thiamine diphosphate biosynthesis. Catalyzes the ATP-dependent transfer of a sulfur to tRNA to produce 4-thiouridine in position 8 of tRNAs, which functions as a near-UV photosensor. Also catalyzes the transfer of sulfur to the sulfur carrier protein ThiS, forming ThiS-thiocarboxylate. This is a step in the synthesis of thiazole, in the thiamine biosynthesis pathway. The sulfur is donated as persulfide by IscS. This chain is Probable tRNA sulfurtransferase, found in Mycoplasmopsis pulmonis (strain UAB CTIP) (Mycoplasma pulmonis).